A 531-amino-acid polypeptide reads, in one-letter code: Peptide chain release factor 3 (531 aa).

The tr-type G domain maps to 10-278 (RRRRTFAIIS…SLIDWAPAPK (269 aa)). GTP is bound by residues 19–26 (SHPDAGKT), 87–91 (DTPGH), and 141–144 (NKYD).

This sequence belongs to the TRAFAC class translation factor GTPase superfamily. Classic translation factor GTPase family. PrfC subfamily.

Its subcellular location is the cytoplasm. In terms of biological role, increases the formation of ribosomal termination complexes and stimulates activities of RF-1 and RF-2. It binds guanine nucleotides and has strong preference for UGA stop codons. It may interact directly with the ribosome. The stimulation of RF-1 and RF-2 is significantly reduced by GTP and GDP, but not by GMP. This Neisseria meningitidis serogroup C / serotype 2a (strain ATCC 700532 / DSM 15464 / FAM18) protein is Peptide chain release factor 3.